Reading from the N-terminus, the 241-residue chain is Type III pantothenate kinase (241 aa).

Position 6–13 (6–13 (DVGNTRIK)) interacts with ATP. A substrate-binding site is contributed by 94–97 (GIDR). The Proton acceptor role is filled by Asp96. Position 117 (Asp117) interacts with K(+). Thr120 serves as a coordination point for ATP. Residue Thr172 coordinates substrate.

This sequence belongs to the type III pantothenate kinase family. As to quaternary structure, homodimer. NH4(+) serves as cofactor. K(+) is required as a cofactor.

The protein localises to the cytoplasm. The enzyme catalyses (R)-pantothenate + ATP = (R)-4'-phosphopantothenate + ADP + H(+). The protein operates within cofactor biosynthesis; coenzyme A biosynthesis; CoA from (R)-pantothenate: step 1/5. Functionally, catalyzes the phosphorylation of pantothenate (Pan), the first step in CoA biosynthesis. The chain is Type III pantothenate kinase from Flavobacterium psychrophilum (strain ATCC 49511 / DSM 21280 / CIP 103535 / JIP02/86).